We begin with the raw amino-acid sequence, 353 residues long: C-X-C chemokine receptor type 4 (353 aa).

The interval 1–22 (MEELHIYPSDNYTEEDLGSGDY) is important for chemokine binding and signaling. The Extracellular segment spans residues 1–39 (MEELHIYPSDNYTEEDLGSGDYDSMKEPCFREENAHFNR). Tyr7 carries the sulfotyrosine modification. Residue Asn11 is glycosylated (N-linked (GlcNAc...) asparagine). Tyr12 bears the Sulfotyrosine mark. O-linked (Xyl...) (chondroitin sulfate) serine glycosylation is present at Ser19. Tyr22 carries the sulfotyrosine modification. Disulfide bonds link Cys29-Cys275 and Cys110-Cys187. The chain crosses the membrane as a helical span at residues 40 to 64 (IFLPTVYSIIFLTGIVGNGLVILVM). At 65–78 (GYQKKLRSMTDKYR) the chain is on the cytoplasmic side. The chain crosses the membrane as a helical span at residues 79-100 (LHLSVADLLFVLTLPFWAVEAV). The interval 95 to 98 (WAVE) is chemokine binding. The Extracellular portion of the chain corresponds to 101–111 (ANWYFGNFLCK). The chain crosses the membrane as a helical span at residues 112–131 (AVHVIYTVNLYSSVLILAFI). The interval 114-118 (HVIYT) is chemokine binding. Residues 132–155 (SLDRYLAIVHATNSQRPRKLLAEK) lie on the Cytoplasmic side of the membrane. The Important for signaling motif lies at 134–136 (DRY). The segment at 136-148 (YLAIVHATNSQRP) is involved in dimerization; when bound to chemokine. Residues 156-175 (VVYVGVWIPALLLTIPDFIF) form a helical membrane-spanning segment. Topologically, residues 176–196 (ANVREADDRYICDRFYPNDSW) are extracellular. The segment at 187 to 191 (CDRFY) is chemokine binding, important for signaling. An involved in dimerization region spans residues 192 to 211 (PNDSWLVVFQFQHIMVGLIL). Residues 197 to 217 (LVVFQFQHIMVGLILPGIVIL) traverse the membrane as a helical segment. Residues 218-242 (SCYCIIISKLSHSKGYQKRKALKTT) are Cytoplasmic-facing. Residues 243–262 (VILILAFFACWLPYYIGISI) traverse the membrane as a helical segment. The Extracellular portion of the chain corresponds to 263 to 283 (DSFILLEIIKQGCEFEKTVHK). An involved in dimerization region spans residues 267-269 (LLE). Residues 284-303 (WISITEALAFFHCCLNPILY) form a helical membrane-spanning segment. Over 304–353 (AFLGAKFKTSAQHALTSVSRGSSLKILSKGKRGGHSSVSTESESSSFHSS) the chain is Cytoplasmic. 2 positions are modified to phosphoserine: Ser320 and Ser322. Phosphoserine; by PKC and GRK6 occurs at positions 325 and 326. Residues 330–353 (LSKGKRGGHSSVSTESESSSFHSS) are disordered. Phosphoserine; by GRK6 is present on Ser331. A Glycyl lysine isopeptide (Lys-Gly) (interchain with G-Cter in ubiquitin) cross-link involves residue Lys332. Residues 338–353 (HSSVSTESESSSFHSS) are compositionally biased toward low complexity. At Ser340 the chain carries Phosphoserine; by GRK6. Ser349 and Ser352 each carry phosphoserine.

This sequence belongs to the G-protein coupled receptor 1 family. In terms of assembly, monomer. Can form homodimers. Interacts with CD164. Interacts with ARRB2; the interaction is dependent on the C-terminal phosphorylation of CXCR4 and allows activation of MAPK1 and MAPK3. Interacts with ARR3; the interaction is dependent on the C-terminal phosphorylation of CXCR4 and modulates calcium mobilization. Interacts with RNF113A; the interaction, enhanced by CXCL12, promotes CXCR4 ubiquitination and subsequent degradation. Interacts (via the cytoplasmic C-terminal) with ITCH (via the WW domains I and II); the interaction, enhanced by CXCL12, promotes CXCR4 ubiquitination and leads to its degradation. Interacts with extracellular ubiquitin. Interacts with DBN1; this interaction is enhanced by antigenic stimulation. Following LPS binding, may form a complex with GDF5, HSP90AA1 and HSPA8. In terms of processing, phosphorylated on agonist stimulation. Rapidly phosphorylated on serine and threonine residues in the C-terminal. Phosphorylation at Ser-325 and Ser-326 leads to recruitment of ITCH, ubiquitination and protein degradation. Ubiquitinated after ligand binding, leading to its degradation. Ubiquitinated by ITCH at the cell membrane on agonist stimulation. The ubiquitin-dependent mechanism, endosomal sorting complex required for transport (ESCRT), then targets CXCR4 for lysosomal degradation. This process is dependent also on prior Ser-/Thr-phosphorylation in the C-terminal of CXCR4. Also binding of ARRB1 to STAM negatively regulates CXCR4 sorting to lysosomes though modulating ubiquitination of SFR5S. Post-translationally, sulfation is required for efficient binding of CXCL12/SDF-1alpha and promotes its dimerization. In terms of processing, O- and N-glycosylated. N-glycosylation can mask coreceptor function. The O-glycosylation chondroitin sulfate attachment does not affect interaction with CXCL12/SDF-1alpha nor its coreceptor activity.

The protein resides in the cell membrane. It localises to the cell junction. Its subcellular location is the early endosome. The protein localises to the late endosome. It is found in the lysosome. Its function is as follows. Receptor for the C-X-C chemokine CXCL12/SDF-1 that transduces a signal by increasing intracellular calcium ion levels and enhancing MAPK1/MAPK3 activation. Involved in the AKT signaling cascade. Plays a role in regulation of cell migration, e.g. during wound healing. Acts as a receptor for extracellular ubiquitin; leading to enhanced intracellular calcium ions and reduced cellular cAMP levels. Binds bacterial lipopolysaccharide (LPS) et mediates LPS-induced inflammatory response, including TNF secretion by monocytes. Involved in hematopoiesis and in cardiac ventricular septum formation. Also plays an essential role in vascularization of the gastrointestinal tract, probably by regulating vascular branching and/or remodeling processes in endothelial cells. Involved in cerebellar development. In the CNS, could mediate hippocampal-neuron survival. This is C-X-C chemokine receptor type 4 (CXCR4) from Canis lupus familiaris (Dog).